The following is a 394-amino-acid chain: Chorismate synthase (394 aa).

Positions 40 and 46 each coordinate NADP(+). FMN-binding positions include 135 to 137 (RAS) and 255 to 256 (QA). Positions 270 to 291 (RRRGSGAHDEIEPAGAGSRRVR) are disordered. Residues G302, 317–321 (KPISS), and R343 contribute to the FMN site.

It belongs to the chorismate synthase family. In terms of assembly, homotetramer. Requires FMNH2 as cofactor.

It catalyses the reaction 5-O-(1-carboxyvinyl)-3-phosphoshikimate = chorismate + phosphate. It functions in the pathway metabolic intermediate biosynthesis; chorismate biosynthesis; chorismate from D-erythrose 4-phosphate and phosphoenolpyruvate: step 7/7. Catalyzes the anti-1,4-elimination of the C-3 phosphate and the C-6 proR hydrogen from 5-enolpyruvylshikimate-3-phosphate (EPSP) to yield chorismate, which is the branch point compound that serves as the starting substrate for the three terminal pathways of aromatic amino acid biosynthesis. This reaction introduces a second double bond into the aromatic ring system. The polypeptide is Chorismate synthase (Frankia casuarinae (strain DSM 45818 / CECT 9043 / HFP020203 / CcI3)).